The following is a 278-amino-acid chain: S-formylglutathione hydrolase YeiG (278 aa).

Residues serine 145, aspartate 223, and histidine 256 each act as charge relay system in the active site.

The protein belongs to the esterase D family.

The catalysed reaction is S-formylglutathione + H2O = formate + glutathione + H(+). Serine hydrolase involved in the detoxification of formaldehyde. Hydrolyzes S-formylglutathione to glutathione and formate. The chain is S-formylglutathione hydrolase YeiG (yeiG) from Escherichia coli (strain UTI89 / UPEC).